Reading from the N-terminus, the 345-residue chain is Anthranilate phosphoribosyltransferase (345 aa).

Residues glycine 84, 87-88 (GD), threonine 92, 94-97 (NIST), 112-120 (KHGGRGVSS), and serine 124 each bind 5-phospho-alpha-D-ribose 1-diphosphate. Residue glycine 84 coordinates anthranilate. Residue serine 96 participates in Mg(2+) binding. Residue arginine 170 participates in anthranilate binding. Mg(2+) is bound by residues aspartate 229 and glutamate 230.

Belongs to the anthranilate phosphoribosyltransferase family. Homodimer. Mg(2+) is required as a cofactor.

The enzyme catalyses N-(5-phospho-beta-D-ribosyl)anthranilate + diphosphate = 5-phospho-alpha-D-ribose 1-diphosphate + anthranilate. Its pathway is amino-acid biosynthesis; L-tryptophan biosynthesis; L-tryptophan from chorismate: step 2/5. Functionally, catalyzes the transfer of the phosphoribosyl group of 5-phosphorylribose-1-pyrophosphate (PRPP) to anthranilate to yield N-(5'-phosphoribosyl)-anthranilate (PRA). In Paracidovorax citrulli (strain AAC00-1) (Acidovorax citrulli), this protein is Anthranilate phosphoribosyltransferase.